Here is a 1117-residue protein sequence, read N- to C-terminus: Telomerase reverse transcriptase (1117 aa).

Residues 1–191 form a TEN region; that stretch reads MQKINNINNN…VKQKKWYKNN (191 aa). Positions 217-519 are RBD; the sequence is NQYIYPEIQR…ENLEKVEEKL (303 aa). The region spanning 517 to 881 is the Reverse transcriptase domain; the sequence is EKLIPEDSFQ…NECQWIGKSI (365 aa). The interval 520-887 is RT; the sequence is IPEDSFQKYP…GKSIDMNTLE (368 aa). Residue Asp618 participates in Mg(2+) binding. Residues 638–742 are TRAP; sequence SDLIQDTYFI…NQDKPRCITK (105 aa). Residues Asp815 and Asp816 each contribute to the Mg(2+) site. The segment at 888–1117 is CTE; it reads IKSIQKQTQQ…SAKSNQQNTN (230 aa).

It belongs to the reverse transcriptase family. Telomerase subfamily. Component of the telomerase holoenzyme complex, composed of the catalytic core (the catalytic subunit TERT, the telomerase RNA template component TER and TAP65/p65), which is associated with two heterotrimeric subcomplexes: (i) the replication protein A (RPA)-related subcomplex, composed of TEB1, RPA2/TEB2 and RPA3/TEB3 and (ii) the CST-like subcomplex, composed of TAP75/p75, TAP45/p45 and TAP19/p19. TEB1 and the CST-like subcomplex are tethered to the catalytic core by TAP50/p50.

The protein localises to the nucleus. It localises to the chromosome. It is found in the telomere. The enzyme catalyses DNA(n) + a 2'-deoxyribonucleoside 5'-triphosphate = DNA(n+1) + diphosphate. Catalytic component of telomerase, an essential ribonucleoprotein enzyme that copies new telomeric repeats onto chromosome ends by repetitively synthesizing the short telomere-repeat sequence 5'-TTGGGG-3' using an RNA template component TER. TERT is a reverse transcriptase that adds simple sequence repeats to chromosome ends by copying a template sequence within the RNA component of the enzyme. In Tetrahymena thermophila (strain SB210), this protein is Telomerase reverse transcriptase.